The following is a 222-amino-acid chain: Glycerol-3-phosphate acyltransferase (222 aa).

The next 6 helical transmembrane spans lie at 4 to 24 (ALLL…IPTG), 56 to 76 (PAAI…VALV), 87 to 107 (ALPA…VVLG), 130 to 150 (FMLN…VIFF), 153 to 173 (IVSL…LALQ), and 174 to 191 (LPPP…YVIV).

This sequence belongs to the PlsY family. In terms of assembly, probably interacts with PlsX.

The protein localises to the cell inner membrane. The enzyme catalyses an acyl phosphate + sn-glycerol 3-phosphate = a 1-acyl-sn-glycero-3-phosphate + phosphate. The protein operates within lipid metabolism; phospholipid metabolism. Its function is as follows. Catalyzes the transfer of an acyl group from acyl-phosphate (acyl-PO(4)) to glycerol-3-phosphate (G3P) to form lysophosphatidic acid (LPA). This enzyme utilizes acyl-phosphate as fatty acyl donor, but not acyl-CoA or acyl-ACP. This Synechocystis sp. (strain ATCC 27184 / PCC 6803 / Kazusa) protein is Glycerol-3-phosphate acyltransferase.